The sequence spans 850 residues: Protein translocase subunit SecA (850 aa).

ATP is bound by residues Gln87, 105–109, and Asp494; that span reads GEGKT. The Zn(2+) site is built by Cys834, Cys836, Cys845, and Cys846.

This sequence belongs to the SecA family. As to quaternary structure, monomer and homodimer. Part of the essential Sec protein translocation apparatus which comprises SecA, SecYEG and auxiliary proteins SecDF-YajC and YidC. It depends on Zn(2+) as a cofactor.

Its subcellular location is the cell inner membrane. It localises to the cytoplasm. The enzyme catalyses ATP + H2O + cellular proteinSide 1 = ADP + phosphate + cellular proteinSide 2.. Part of the Sec protein translocase complex. Interacts with the SecYEG preprotein conducting channel. Has a central role in coupling the hydrolysis of ATP to the transfer of proteins into and across the cell membrane, serving as an ATP-driven molecular motor driving the stepwise translocation of polypeptide chains across the membrane. In Desulfotalea psychrophila (strain LSv54 / DSM 12343), this protein is Protein translocase subunit SecA.